The primary structure comprises 445 residues: Phosphoglucosamine mutase (445 aa).

The Phosphoserine intermediate role is filled by S102. Residues S102, D241, D243, and D245 each contribute to the Mg(2+) site. S102 bears the Phosphoserine mark.

It belongs to the phosphohexose mutase family. Mg(2+) is required as a cofactor. In terms of processing, activated by phosphorylation.

It carries out the reaction alpha-D-glucosamine 1-phosphate = D-glucosamine 6-phosphate. In terms of biological role, catalyzes the conversion of glucosamine-6-phosphate to glucosamine-1-phosphate. The polypeptide is Phosphoglucosamine mutase (Rhodococcus erythropolis (strain PR4 / NBRC 100887)).